Reading from the N-terminus, the 326-residue chain is Holliday junction branch migration complex subunit RuvB (326 aa).

A large ATPase domain (RuvB-L) region spans residues 1–180 (MRSISCSKEY…FGIPLRLEFY (180 aa)). Residues Ile-19, Arg-20, Gly-61, Lys-64, Thr-65, Thr-66, 127-129 (EDF), Arg-170, Tyr-180, and Arg-217 contribute to the ATP site. Thr-65 lines the Mg(2+) pocket. The segment at 181–251 (SFEELVDIIK…IADSALSKLG (71 aa)) is small ATPAse domain (RuvB-S). The interval 254–326 (KMGLNKLDVD…QGKEYLSLQY (73 aa)) is head domain (RuvB-H). Residues Arg-307 and Arg-312 each coordinate DNA.

Belongs to the RuvB family. As to quaternary structure, homohexamer. Forms an RuvA(8)-RuvB(12)-Holliday junction (HJ) complex. HJ DNA is sandwiched between 2 RuvA tetramers; dsDNA enters through RuvA and exits via RuvB. An RuvB hexamer assembles on each DNA strand where it exits the tetramer. Each RuvB hexamer is contacted by two RuvA subunits (via domain III) on 2 adjacent RuvB subunits; this complex drives branch migration. In the full resolvosome a probable DNA-RuvA(4)-RuvB(12)-RuvC(2) complex forms which resolves the HJ.

The protein resides in the cytoplasm. It catalyses the reaction ATP + H2O = ADP + phosphate + H(+). Its function is as follows. The RuvA-RuvB-RuvC complex processes Holliday junction (HJ) DNA during genetic recombination and DNA repair, while the RuvA-RuvB complex plays an important role in the rescue of blocked DNA replication forks via replication fork reversal (RFR). RuvA specifically binds to HJ cruciform DNA, conferring on it an open structure. The RuvB hexamer acts as an ATP-dependent pump, pulling dsDNA into and through the RuvAB complex. RuvB forms 2 homohexamers on either side of HJ DNA bound by 1 or 2 RuvA tetramers; 4 subunits per hexamer contact DNA at a time. Coordinated motions by a converter formed by DNA-disengaged RuvB subunits stimulates ATP hydrolysis and nucleotide exchange. Immobilization of the converter enables RuvB to convert the ATP-contained energy into a lever motion, pulling 2 nucleotides of DNA out of the RuvA tetramer per ATP hydrolyzed, thus driving DNA branch migration. The RuvB motors rotate together with the DNA substrate, which together with the progressing nucleotide cycle form the mechanistic basis for DNA recombination by continuous HJ branch migration. Branch migration allows RuvC to scan DNA until it finds its consensus sequence, where it cleaves and resolves cruciform DNA. The protein is Holliday junction branch migration complex subunit RuvB of Wolbachia sp. subsp. Brugia malayi (strain TRS).